The chain runs to 67 residues: Large ribosomal subunit protein bL35 (67 aa).

It belongs to the bacterial ribosomal protein bL35 family.

The chain is Large ribosomal subunit protein bL35 from Bartonella henselae (strain ATCC 49882 / DSM 28221 / CCUG 30454 / Houston 1) (Rochalimaea henselae).